A 392-amino-acid chain; its full sequence is uncharacterized protein (392 aa).

In terms of domain architecture, J spans threonine 7–glutamate 76. Serine 108 is modified (phosphoserine).

This is an uncharacterized protein from Schizosaccharomyces pombe (strain 972 / ATCC 24843) (Fission yeast).